The primary structure comprises 302 residues: Aspartate carbamoyltransferase catalytic subunit (302 aa).

2 residues coordinate carbamoyl phosphate: R53 and T54. K82 is an L-aspartate binding site. Residues R103, H131, and Q134 each contribute to the carbamoyl phosphate site. L-aspartate-binding residues include R164 and R223. 2 residues coordinate carbamoyl phosphate: L260 and P261.

It belongs to the aspartate/ornithine carbamoyltransferase superfamily. ATCase family. In terms of assembly, heterooligomer of catalytic and regulatory chains.

It carries out the reaction carbamoyl phosphate + L-aspartate = N-carbamoyl-L-aspartate + phosphate + H(+). It functions in the pathway pyrimidine metabolism; UMP biosynthesis via de novo pathway; (S)-dihydroorotate from bicarbonate: step 2/3. Its function is as follows. Catalyzes the condensation of carbamoyl phosphate and aspartate to form carbamoyl aspartate and inorganic phosphate, the committed step in the de novo pyrimidine nucleotide biosynthesis pathway. This chain is Aspartate carbamoyltransferase catalytic subunit, found in Methanococcus maripaludis (strain C7 / ATCC BAA-1331).